The sequence spans 160 residues: Protein P5 (160 aa).

Residues 7–23 (FLATAAALGVAMFPTQI) form a helical membrane-spanning segment.

It is found in the virion membrane. The chain is Protein P5 (V) from Pseudoalteromonas espejiana (Bacteriophage PM2).